Here is a 320-residue protein sequence, read N- to C-terminus: Methionyl-tRNA formyltransferase (320 aa).

Residue 114-117 (SLLP) coordinates (6S)-5,6,7,8-tetrahydrofolate.

The protein belongs to the Fmt family.

The catalysed reaction is L-methionyl-tRNA(fMet) + (6R)-10-formyltetrahydrofolate = N-formyl-L-methionyl-tRNA(fMet) + (6S)-5,6,7,8-tetrahydrofolate + H(+). In terms of biological role, attaches a formyl group to the free amino group of methionyl-tRNA(fMet). The formyl group appears to play a dual role in the initiator identity of N-formylmethionyl-tRNA by promoting its recognition by IF2 and preventing the misappropriation of this tRNA by the elongation apparatus. In Acinetobacter baumannii (strain ACICU), this protein is Methionyl-tRNA formyltransferase.